The sequence spans 758 residues: Xaa-Pro dipeptidyl-peptidase (758 aa).

Catalysis depends on charge relay system residues Ser-349, Asp-469, and His-499.

This sequence belongs to the peptidase S15 family. As to quaternary structure, homodimer.

The protein resides in the cytoplasm. The catalysed reaction is Hydrolyzes Xaa-Pro-|- bonds to release unblocked, N-terminal dipeptides from substrates including Ala-Pro-|-p-nitroanilide and (sequentially) Tyr-Pro-|-Phe-Pro-|-Gly-Pro-|-Ile.. Functionally, removes N-terminal dipeptides sequentially from polypeptides having unsubstituted N-termini provided that the penultimate residue is proline. This Streptococcus uberis (strain ATCC BAA-854 / 0140J) protein is Xaa-Pro dipeptidyl-peptidase.